We begin with the raw amino-acid sequence, 90 residues long: Small ribosomal subunit protein uS19 (90 aa).

Belongs to the universal ribosomal protein uS19 family.

In terms of biological role, protein S19 forms a complex with S13 that binds strongly to the 16S ribosomal RNA. In Rhizorhabdus wittichii (strain DSM 6014 / CCUG 31198 / JCM 15750 / NBRC 105917 / EY 4224 / RW1) (Sphingomonas wittichii), this protein is Small ribosomal subunit protein uS19.